We begin with the raw amino-acid sequence, 486 residues long: Malonate-semialdehyde dehydrogenase 2 (486 aa).

Positions 154, 178, 181, 182, and 231 each coordinate NAD(+). The Nucleophile role is filled by C286. NAD(+) is bound at residue E386.

It belongs to the aldehyde dehydrogenase family. IolA subfamily. As to quaternary structure, homotetramer.

The enzyme catalyses 3-oxopropanoate + NAD(+) + CoA + H2O = hydrogencarbonate + acetyl-CoA + NADH + H(+). It carries out the reaction 2-methyl-3-oxopropanoate + NAD(+) + CoA + H2O = propanoyl-CoA + hydrogencarbonate + NADH + H(+). It participates in polyol metabolism; myo-inositol degradation into acetyl-CoA; acetyl-CoA from myo-inositol: step 7/7. Functionally, catalyzes the oxidation of malonate semialdehyde (MSA) and methylmalonate semialdehyde (MMSA) into acetyl-CoA and propanoyl-CoA, respectively. Is involved in a myo-inositol catabolic pathway. Bicarbonate, and not CO2, is the end-product of the enzymatic reaction. The polypeptide is Malonate-semialdehyde dehydrogenase 2 (Oceanobacillus iheyensis (strain DSM 14371 / CIP 107618 / JCM 11309 / KCTC 3954 / HTE831)).